The following is a 148-amino-acid chain: MKLSVLLALGASSLAAAAPAATACDCGAAVTDRLLFSSSISTFQAARNALNPPCCDWSSDNCSSSPDKPRGYDFIPSCQRHDYGYRNGKRLNRFTEDYRKKVDDNFKADLYNYCSQFSGLESWKGVECRRYADIYYFFVRECGDGDCP.

A signal peptide spans 1–23 (MKLSVLLALGASSLAAAAPAATA). N61 carries N-linked (GlcNAc...) asparagine glycosylation. C62 and C78 form a disulfide bridge. H81 is an active-site residue. D82 contacts Ca(2+).

This sequence belongs to the phospholipase A2 family. Requires Ca(2+) as cofactor.

It localises to the secreted. The catalysed reaction is a 1,2-diacyl-sn-glycero-3-phosphocholine + H2O = a 1-acyl-sn-glycero-3-phosphocholine + a fatty acid + H(+). Functionally, secretory phospholipase that catalyzes the calcium-dependent hydrolysis of the 2-acyl groups in 3-sn-phosphoglycerides. Increases the ability to utilize host-derived nutrients and lipids, and promotes lipid dropplets accumulation. Plays a role in virulence. This is Secretory phospholipase A2 from Arthroderma benhamiae (strain ATCC MYA-4681 / CBS 112371) (Trichophyton mentagrophytes).